Consider the following 555-residue polypeptide: Neurofilament light polypeptide (555 aa).

Ser2 carries the post-translational modification N-acetylserine. The segment at 2–93 is head; that stretch reads SSFSYEPYYS…KSIRTQEKAQ (92 aa). Arg23 bears the Asymmetric dimethylarginine; alternate mark. Position 23 is an omega-N-methylarginine; alternate (Arg23). Arg30 carries the post-translational modification Omega-N-methylarginine. The residue at position 43 (Tyr43) is a Phosphotyrosine. A phosphoserine mark is found at Ser56, Ser67, and Ser103. The IF rod domain occupies 90–401; the sequence is EKAQLQDLND…KLLEGEETRL (312 aa). Residues 94–125 are coil 1A; the sequence is LQDLNDRFASFIERVHELEQQNKVLEAELLVL. The interval 126–138 is linker 1; the sequence is RQKHSEPSRFRAL. The coil 1B stretch occupies residues 139–234; the sequence is YEQEIRDLRL…KVHEEEIAEL (96 aa). Residues 235–253 form a linker 12 region; the sequence is QAQIQYAQISVEMDVSSKP. A coil 2A region spans residues 254-272; that stretch reads DLSAALKDIRAQYEKLAAK. Positions 273-281 are linker 2; it reads NMQNAEEWF. The tract at residues 282–397 is coil 2B; sequence KSRFTVLTES…AAYRKLLEGE (116 aa). Residues 398–444 form a tail, subdomain A region; sequence ETRLSFTSVGSLTTGYTQSSQVFGRSAYGGLQTSSYLMSARSFPSYY. The interval 398–555 is tail; sequence ETRLSFTSVG…GEEQATKKKD (158 aa). The tail, subdomain B (acidic) stretch occupies residues 445–555; sequence TSHVQEEQIE…GEEQATKKKD (111 aa). Residues 463 to 555 form a disordered region; that stretch reads KAEEAKDEPP…GEEQATKKKD (93 aa). The segment covering 472-540 has biased composition (acidic residues); that stretch reads PSEGEAEEEE…ETKEAEEEEK (69 aa). Ser473 is subject to Phosphoserine. At Thr532 the chain carries Phosphothreonine. Residues 541–555 are compositionally biased toward basic and acidic residues; the sequence is KDEGAGEEQATKKKD.

The protein belongs to the intermediate filament family. As to quaternary structure, forms homodimers (in vitro). Forms heterodimers with NEFH or NEFM; which can further hetero-oligomerize (in vitro). Forms heterodimers with INA (in vitro). Interacts with ARHGEF28. Interacts with TRIM2. O-glycosylated. Post-translationally, phosphorylated in the head and rod regions by the PKC kinase PKN1, leading to the inhibition of polymerization. In terms of processing, ubiquitinated in the presence of TRIM2 and UBE2D1.

Its subcellular location is the cell projection. It localises to the axon. The protein localises to the cytoplasm. It is found in the cytoskeleton. Its function is as follows. Neurofilaments usually contain three intermediate filament proteins: NEFL, NEFM, and NEFH which are involved in the maintenance of neuronal caliber. May additionally cooperate with the neuronal intermediate filament proteins PRPH and INA to form neuronal filamentous networks. In Bos taurus (Bovine), this protein is Neurofilament light polypeptide (NEFL).